A 94-amino-acid polypeptide reads, in one-letter code: Protein EGG APPARATUS-1 (94 aa).

Topologically, residues methionine 1–glycine 15 are cytoplasmic. Residues isoleucine 16–leucine 36 form a helical; Signal-anchor for type II membrane protein membrane-spanning segment. Over tryptophan 37–serine 94 the chain is Extracellular.

In terms of processing, possible proteolysis of the C-terminal region from the predicted transmembrane domain to permit secretion and transport of the mature protein to the cell walls of the nucellus, allowing the spreading from the egg cell apparatus to the micropylar opening of the ovule. Expressed only in the egg apparatus, consisting of the egg cell and two synergids. Not detected in the central cell, antipodals, and nucellar and integumental cells.

It is found in the membrane. Functionally, involved in short-range signaling required for pollen tube attraction by the female gametophyte. Required for female fertility. The chain is Protein EGG APPARATUS-1 (Ea1) from Zea mays (Maize).